Consider the following 69-residue polypeptide: Sec-independent protein translocase protein TatA (69 aa).

A helical membrane pass occupies residues 1 to 21 (MGSLSIWHWLIVLAIALLLFG). The interval 41–69 (KGMNDDEETPPPAQSTTSRTVEHKADESK) is disordered. Positions 60-69 (TVEHKADESK) are enriched in basic and acidic residues.

It belongs to the TatA/E family. The Tat system comprises two distinct complexes: a TatABC complex, containing multiple copies of TatA, TatB and TatC subunits, and a separate TatA complex, containing only TatA subunits. Substrates initially bind to the TatABC complex, which probably triggers association of the separate TatA complex to form the active translocon.

Its subcellular location is the cell inner membrane. Functionally, part of the twin-arginine translocation (Tat) system that transports large folded proteins containing a characteristic twin-arginine motif in their signal peptide across membranes. TatA could form the protein-conducting channel of the Tat system. The sequence is that of Sec-independent protein translocase protein TatA from Rhizobium rhizogenes (strain K84 / ATCC BAA-868) (Agrobacterium radiobacter).